Reading from the N-terminus, the 296-residue chain is MTKKQLHLVIVTGMGGAGKTVAIQSFEDLGYFTIDNMPPALLPKFLQLVEIKEDNPKLALVVDMRSRSFFSEIQAVLDELENQDGLDFKILFLDAADKELVARYKETRRSHPLAADGRILDGIKLERELLAPLKNMSQNVVDTTELTPRELRKTLAEQFSDQEQAQSFRIEVMSFGFKYGIPIDADLVFDVRFLPNPYYLPELRNQTGVDEPVYDYVMNHPESEDFYQHLLALIEPILPSYQKEGKSVLTIAMGCTGGQHRSVAFAKRLVQDLSKNWSVNEGHRDKDRRKETVNRS.

An ATP-binding site is contributed by Gly13–Thr20. Asp63–Ser66 contacts GTP.

The protein belongs to the RapZ-like family.

Functionally, displays ATPase and GTPase activities. This Streptococcus pneumoniae (strain ATCC BAA-255 / R6) protein is Nucleotide-binding protein spr1424.